The chain runs to 448 residues: Antilisterial bacteriocin subtilosin biosynthesis protein AlbA (448 aa).

Residues 115-329 (FPMPLHATFE…EQHVIDEFKD (215 aa)) form the Radical SAM core domain. [4Fe-4S] cluster-binding residues include Cys129, Cys133, Cys136, Cys408, Cys414, and Cys417.

[4Fe-4S] cluster serves as cofactor.

The protein resides in the cytoplasm. Catalyzes the formation of 3 thioether bonds during production of the sactipeptide subtilosin from SboA. In vitro the thioether bonds cannot be made in the absence of the SboA propeptide, suggesting this is the first reaction in subtilosin maturation. In vitro, in the absence of a second substrate, cleaves S-adenosyl-L-methionine into Met and 5'-dA. The sequence is that of Antilisterial bacteriocin subtilosin biosynthesis protein AlbA (albA) from Bacillus subtilis (strain 168).